We begin with the raw amino-acid sequence, 507 residues long: Myocyte-specific enhancer factor 2A (507 aa).

Residues 3-57 (RKKIQITRIMDERNRQVTFTKRKFGLMKKAYELSVLCDCEIALIIFNSSNKLFQY) form the MADS-box domain. Positions 58 to 86 (ASTDMDKVLLKYTEYNEPHESGTNSDIVE) form a DNA-binding region, mef2-type. Residue Ser59 is modified to Phosphoserine; by CK2. 2 positions are modified to phosphoserine: Ser98 and Ser235. Residues 175–269 (ADSSMLSPPQ…GGGNLGMNSR (95 aa)) are disordered. Positions 209-245 (LSTSDLTVPNGAGSSPVGNGFVNSRASPNLVGTTGAN) are enriched in polar residues. Lys249 carries the post-translational modification N6-acetyllysine. Ser255 bears the Phosphoserine mark. The segment at 266 to 283 (MNSRKPDLRVVIPPSSKG) is required for interaction with MAPKs. Positions 289 to 296 (SEEEELEL) are beta domain. Phosphothreonine; by MAPK7 and MAPK14 occurs at positions 312 and 319. Ser355 is subject to Phosphoserine; by MAPK7. The segment covering 390–402 (SNLSINTNQNINI) has biased composition (polar residues). The segment at 390–507 (SNLSINTNQN…KRMRMDAWVT (118 aa)) is disordered. Lys403 carries the N6-acetyllysine; alternate modification. Lys403 participates in a covalent cross-link: Glycyl lysine isopeptide (Lys-Gly) (interchain with G-Cter in SUMO); alternate. Residue Ser408 is modified to Phosphoserine; by CDK5. Thr415 bears the Phosphothreonine mark. The segment covering 423–443 (QPPPPSQAPQPQPPQPQPQPQ) has biased composition (pro residues). The residue at position 453 (Ser453) is a Phosphoserine. Residues 453 to 466 (SPVDSLSSSSSSYD) show a composition bias toward low complexity. 2 stretches are compositionally biased toward basic and acidic residues: residues 467–477 (GSDREDPRGDF) and 488–507 (NTED…AWVT).

Belongs to the MEF2 family. As to quaternary structure, binds DNA as a homo- or heterodimer. Dimerizes with MEF2D. Interacts with HDAC7. Interacts with PIAS1; the interaction enhances sumoylation. Interacts with HDAC4, HDAC9 and SLC2A4RG. Interacts (via the N-terminal) with MAPK7; the interaction results in the phosphorylation and transcriptional activity of MEF2A. Post-translationally, constitutive phosphorylation on Ser-408 promotes Lys-403 sumoylation thus preventing acetylation at this site. Dephosphorylation on Ser-408 by PPP3CA upon neuron depolarization promotes a switch from sumoylation to acetylation on residue Lys-403 leading to inhibition of dendrite claw differentiation. Phosphorylation on Thr-312 and Thr-319 are the main sites involved in p38 MAPK signaling and activate transcription. Phosphorylated on these sites by MAPK14/p38alpha and MAPK11/p38beta, but not by MAPK13/p38delta nor by MAPK12/p38gamma. Phosphorylation on Ser-408 by CDK5 induced by neurotoxicity inhibits MEF2A transcriptional activation leading to apoptosis of cortical neurons. Phosphorylation on Thr-312, Thr-319 and Ser-355 can be induced by EGF. Sumoylation on Lys-403 is enhanced by PIAS1 and represses transcriptional activity. Phosphorylation on Ser-408 is required for sumoylation. Has no effect on nuclear location nor on DNA binding. Sumoylated with SUMO1 and, to a lesser extent with SUMO2 and SUMO3. PIASx facilitates sumoylation in postsynaptic dendrites in the cerebellar cortex and promotes their morphogenesis. In terms of processing, acetylation on Lys-403 activates transcriptional activity. Acetylated by p300 on several sites in diffentiating myocytes. Acetylation on Lys-4 increases DNA binding and transactivation. Hyperacetylation by p300 leads to enhanced cardiac myocyte growth and heart failure. Post-translationally, proteolytically cleaved on several sites by caspase 3 and caspase 7 following neurotoxicity. Preferentially cleaves the CDK5-mediated hyperphosphorylated form which leads to cortical neuron apoptosis and transcriptional inactivation.

It localises to the nucleus. Functionally, transcriptional activator which binds specifically to the MEF2 element, 5'-YTA[AT](4)TAR-3', found in numerous muscle-specific genes. Also involved in the activation of numerous growth factor- and stress-induced genes. Mediates cellular functions not only in skeletal and cardiac muscle development, but also in neuronal differentiation and survival. Plays diverse roles in the control of cell growth, survival and apoptosis via p38 MAPK signaling in muscle-specific and/or growth factor-related transcription. In cerebellar granule neurons, phosphorylated and sumoylated MEF2A represses transcription of NUR77 promoting synaptic differentiation. Associates with chromatin to the ZNF16 promoter. The chain is Myocyte-specific enhancer factor 2A (MEF2A) from Sus scrofa (Pig).